The primary structure comprises 225 residues: GrpE protein homolog 2, mitochondrial (225 aa).

The N-terminal 32 residues, 1–32 (MAVRSLWAGRLRVQRLLAWSAAWESKGWPLPF), are a transit peptide targeting the mitochondrion. Lys-142 carries the N6-acetyllysine modification.

Belongs to the GrpE family. As to quaternary structure, probable component of the PAM complex at least composed of a mitochondrial HSP70 protein, GRPEL1 or GRPEL2, TIMM44, TIMM16/PAM16 and TIMM14/DNAJC19.

Its subcellular location is the mitochondrion matrix. Its function is as follows. Essential component of the PAM complex, a complex required for the translocation of transit peptide-containing proteins from the inner membrane into the mitochondrial matrix in an ATP-dependent manner. Seems to control the nucleotide-dependent binding of mitochondrial HSP70 to substrate proteins. Stimulates ATPase activity of mt-HSP70. May also serve to modulate the interconversion of oligomeric (inactive) and monomeric (active) forms of mt-HSP70. In Homo sapiens (Human), this protein is GrpE protein homolog 2, mitochondrial (GRPEL2).